The primary structure comprises 435 residues: Adenylosuccinate synthetase (435 aa).

Residues 11–17 and 39–41 each bind GTP; these read GDEGKGK and GHT. Catalysis depends on Asp12, which acts as the Proton acceptor. Mg(2+) is bound by residues Asp12 and Gly39. IMP is bound by residues 12 to 15, 37 to 40, Thr128, Arg142, Gln223, Thr238, and Arg302; these read DEGK and NAGH. Catalysis depends on His40, which acts as the Proton donor. 298 to 304 contributes to the substrate binding site; that stretch reads SVTGRPR. Residues Arg304, 330–332, and 412–414 contribute to the GTP site; these read KLD and STG.

Belongs to the adenylosuccinate synthetase family. Homodimer. Requires Mg(2+) as cofactor.

The protein localises to the cytoplasm. It catalyses the reaction IMP + L-aspartate + GTP = N(6)-(1,2-dicarboxyethyl)-AMP + GDP + phosphate + 2 H(+). The protein operates within purine metabolism; AMP biosynthesis via de novo pathway; AMP from IMP: step 1/2. Plays an important role in the de novo pathway of purine nucleotide biosynthesis. Catalyzes the first committed step in the biosynthesis of AMP from IMP. This Coxiella burnetii (strain Dugway 5J108-111) protein is Adenylosuccinate synthetase.